A 465-amino-acid polypeptide reads, in one-letter code: UDP-N-acetylmuramate--L-alanine ligase (465 aa).

112–118 (GTHGKTT) contributes to the ATP binding site.

Belongs to the MurCDEF family.

Its subcellular location is the cytoplasm. It catalyses the reaction UDP-N-acetyl-alpha-D-muramate + L-alanine + ATP = UDP-N-acetyl-alpha-D-muramoyl-L-alanine + ADP + phosphate + H(+). The protein operates within cell wall biogenesis; peptidoglycan biosynthesis. Cell wall formation. The protein is UDP-N-acetylmuramate--L-alanine ligase of Burkholderia thailandensis (strain ATCC 700388 / DSM 13276 / CCUG 48851 / CIP 106301 / E264).